A 226-amino-acid chain; its full sequence is UPF0758 protein PputW619_0186 (226 aa).

One can recognise an MPN domain in the interval alanine 102–isoleucine 224. The Zn(2+) site is built by histidine 173, histidine 175, and aspartate 186. The JAMM motif motif lies at histidine 173–aspartate 186.

The protein belongs to the UPF0758 family.

In Pseudomonas putida (strain W619), this protein is UPF0758 protein PputW619_0186.